Reading from the N-terminus, the 546-residue chain is Chaperonin GroEL 1 (546 aa).

Residues 29–32 (TIGP), 86–90 (DGTTT), G413, 477–479 (NAA), and D493 contribute to the ATP site. The interval 523-546 (PAEPAPQDGHGHGHGHSHPQGPGF) is disordered.

It belongs to the chaperonin (HSP60) family. In terms of assembly, forms a cylinder of 14 subunits composed of two heptameric rings stacked back-to-back. Interacts with the co-chaperonin GroES.

It is found in the cytoplasm. It catalyses the reaction ATP + H2O + a folded polypeptide = ADP + phosphate + an unfolded polypeptide.. Its function is as follows. Together with its co-chaperonin GroES, plays an essential role in assisting protein folding. The GroEL-GroES system forms a nano-cage that allows encapsulation of the non-native substrate proteins and provides a physical environment optimized to promote and accelerate protein folding. The chain is Chaperonin GroEL 1 from Frankia casuarinae (strain DSM 45818 / CECT 9043 / HFP020203 / CcI3).